A 193-amino-acid chain; its full sequence is Putative 3-methyladenine DNA glycosylase (193 aa).

This sequence belongs to the DNA glycosylase MPG family.

In Francisella tularensis subsp. tularensis (strain FSC 198), this protein is Putative 3-methyladenine DNA glycosylase.